Reading from the N-terminus, the 51-residue chain is 2,3,4,5-tetrahydropyridine-2,6-dicarboxylate N-succinyltransferase (51 aa).

The protein belongs to the transferase hexapeptide repeat family. Homotrimer.

It is found in the cytoplasm. It carries out the reaction (S)-2,3,4,5-tetrahydrodipicolinate + succinyl-CoA + H2O = (S)-2-succinylamino-6-oxoheptanedioate + CoA. It participates in amino-acid biosynthesis; L-lysine biosynthesis via DAP pathway; LL-2,6-diaminopimelate from (S)-tetrahydrodipicolinate (succinylase route): step 1/3. The protein is 2,3,4,5-tetrahydropyridine-2,6-dicarboxylate N-succinyltransferase (dapD) of Klebsiella oxytoca.